Here is a 337-residue protein sequence, read N- to C-terminus: MTTPTTLVEFQTALAAATGPDDAARAGAAERNGQLTKPPGALGLLEDLAIWYAGWRGDARPRITAPQVLVFAGNHGVAARGVSAFPPEVTVQMVANFAHGGAAINQLSDLAGATMSVHPIDLETPTADFTQGPAMSEAGVMAAIAVGWEAVDTDADLLVVGEMGIGNTTSAAAVANALYGGAPEDWTGRGTGVDEAGIALKSRIVAEGLAVNPEAATDPLQALRCLGGRELAAMAGAIAHARILHIPVILDGFICTAAAAVLECAVSGALDHAIAGHGSAEQAHARMLHHLGKTPLLQLGLRLGEGSGGALAIQILRGAIACHSGMATFAEAGVAGG.

Catalysis depends on Glu305, which acts as the Proton acceptor.

The protein belongs to the CobT family.

It carries out the reaction 5,6-dimethylbenzimidazole + nicotinate beta-D-ribonucleotide = alpha-ribazole 5'-phosphate + nicotinate + H(+). It participates in nucleoside biosynthesis; alpha-ribazole biosynthesis; alpha-ribazole from 5,6-dimethylbenzimidazole: step 1/2. In terms of biological role, catalyzes the synthesis of alpha-ribazole-5'-phosphate from nicotinate mononucleotide (NAMN) and 5,6-dimethylbenzimidazole (DMB). The sequence is that of Nicotinate-nucleotide--dimethylbenzimidazole phosphoribosyltransferase from Jannaschia sp. (strain CCS1).